The chain runs to 350 residues: Enoyl-[acyl-carrier-protein] reductase, mitochondrial (350 aa).

A mitochondrion-targeting transit peptide spans 1 to 14 (MNSTRNIISLVRRY). Y69 (proton donor) is an active-site residue. NADP(+) is bound by residues N143, 169-172 (NSMV), 192-194 (RDG), 261-264 (YGGM), 286-288 (FWL), and K343.

The protein belongs to the zinc-containing alcohol dehydrogenase family. Quinone oxidoreductase subfamily. Homodimer.

It is found in the mitochondrion. The catalysed reaction is a 2,3-saturated acyl-[ACP] + NADP(+) = a (2E)-enoyl-[ACP] + NADPH + H(+). Its function is as follows. Catalyzes the NADPH-dependent reduction of trans-2-enoyl thioesters in mitochondrial fatty acid synthesis (fatty acid synthesis type II). Fatty acid chain elongation in mitochondria uses acyl carrier protein (ACP) as an acyl group carrier, but the enzyme accepts both ACP and CoA thioesters as substrates in vitro. This is Enoyl-[acyl-carrier-protein] reductase, mitochondrial (mecr) from Dictyostelium discoideum (Social amoeba).